The primary structure comprises 333 residues: Late embryogenesis abundant protein 1 (333 aa).

2 disordered regions span residues 1-20 and 116-246; these read MASRQDRREARAEADARRAA and KDYT…GQGQ. Positions 3-52 form a coiled coil; the sequence is SRQDRREARAEADARRAAEEIARARDERVMQAEVDARSAADEIARARADR. Composition is skewed to basic and acidic residues over residues 116 to 163, 172 to 219, and 227 to 241; these read KDYT…KDAV, EATK…DATK, and DKARETAATHDDATD.

This sequence belongs to the LEA type 4 family.

This is Late embryogenesis abundant protein 1 (LEA1) from Oryza sativa subsp. indica (Rice).